The chain runs to 143 residues: Transcription antitermination protein NusB (143 aa).

Belongs to the NusB family.

Its function is as follows. Involved in transcription antitermination. Required for transcription of ribosomal RNA (rRNA) genes. Binds specifically to the boxA antiterminator sequence of the ribosomal RNA (rrn) operons. The sequence is that of Transcription antitermination protein NusB from Clostridium botulinum (strain ATCC 19397 / Type A).